The chain runs to 485 residues: GTPase Der (485 aa).

EngA-type G domains lie at 3–167 (PTIA…PEPE) and 176–349 (PVFA…NAAM). GTP-binding positions include 9 to 16 (GRPNVGKS), 56 to 60 (DTGGF), 119 to 122 (NKGE), 182 to 189 (GRPNVGKS), 229 to 233 (DTAGV), and 294 to 297 (NKWD). In terms of domain architecture, KH-like spans 350 to 434 (IKMPTPKITR…PLRIQYNVSE (85 aa)). The interval 435 to 485 (NPYENAEDKPKKKPLRRVSLSNRIEKREGRKEEKNRFKKKTKVSVKKQFSK) is disordered. Basic and acidic residues predominate over residues 457–469 (RIEKREGRKEEKN). The segment covering 470 to 485 (RFKKKTKVSVKKQFSK) has biased composition (basic residues).

The protein belongs to the TRAFAC class TrmE-Era-EngA-EngB-Septin-like GTPase superfamily. EngA (Der) GTPase family. In terms of assembly, associates with the 50S ribosomal subunit.

In terms of biological role, GTPase that plays an essential role in the late steps of ribosome biogenesis. The chain is GTPase Der from Neisseria meningitidis serogroup B (strain ATCC BAA-335 / MC58).